The sequence spans 325 residues: Beta-lactamase 1 (325 aa).

Positions 1–26 (MRIRPTRRLLLGAVAPLALVPLVACG) are cleaved as a signal peptide. A disordered region spans residues 30 to 50 (GSESGQQPGLGGCGTSAHGSA). The active-site Acyl-ester intermediate is serine 93. A substrate-binding site is contributed by 270-272 (KSG).

This sequence belongs to the class-A beta-lactamase family.

The enzyme catalyses a beta-lactam + H2O = a substituted beta-amino acid. In Streptomyces cacaoi, this protein is Beta-lactamase 1 (blaL).